The following is a 241-amino-acid chain: Ribosomal RNA small subunit methyltransferase G (241 aa).

Residues Gly96, Phe101, 119 to 121 (EAS), 147 to 148 (VE), and Arg166 each bind S-adenosyl-L-methionine.

This sequence belongs to the methyltransferase superfamily. RNA methyltransferase RsmG family.

The protein resides in the cytoplasm. The catalysed reaction is guanosine(527) in 16S rRNA + S-adenosyl-L-methionine = N(7)-methylguanosine(527) in 16S rRNA + S-adenosyl-L-homocysteine. Its function is as follows. Specifically methylates the N7 position of guanine in position 527 of 16S rRNA. The polypeptide is Ribosomal RNA small subunit methyltransferase G (Syntrophus aciditrophicus (strain SB)).